Here is a 76-residue protein sequence, read N- to C-terminus: NADH-ubiquinone oxidoreductase chain 4L (76 aa).

3 helical membrane passes run 1-21, 29-49, and 56-76; these read MTPVHFSFTSAFILGLMGLAF, ALLCLEGMMLSLFIALSLWAL, and YSVAPMLLLAFSACEASAGLA.

Belongs to the complex I subunit 4L family.

Its subcellular location is the mitochondrion membrane. The enzyme catalyses a ubiquinone + NADH + 5 H(+)(in) = a ubiquinol + NAD(+) + 4 H(+)(out). Its function is as follows. Core subunit of the mitochondrial membrane respiratory chain NADH dehydrogenase (Complex I) which catalyzes electron transfer from NADH through the respiratory chain, using ubiquinone as an electron acceptor. Part of the enzyme membrane arm which is embedded in the lipid bilayer and involved in proton translocation. The chain is NADH-ubiquinone oxidoreductase chain 4L (MT-ND4L) from Oncorhynchus masou (Cherry salmon).